We begin with the raw amino-acid sequence, 683 residues long: Phenoloxidase 3 (683 aa).

The propeptide occupies 1–48 (MADKKNLLLLFDHPTEPVFMDKGGNGTVFDVPDSYVTDRYNQMCKKVQ). Residues histidine 209, histidine 213, and histidine 239 each contribute to the Cu cation site. The active-site Proton acceptor is glutamate 351. An N-linked (GlcNAc...) asparagine glycan is attached at asparagine 358. Histidine 366, histidine 370, and histidine 406 together coordinate Cu cation. N-linked (GlcNAc...) asparagine glycans are attached at residues asparagine 492 and asparagine 546. Cystine bridges form between cysteine 574/cysteine 617 and cysteine 576/cysteine 624.

This sequence belongs to the tyrosinase family. The cofactor is Cu(2+). Post-translationally, upon activation, a trypsin type protease cleaves prophenol oxidase to yield the active enzyme.

It localises to the secreted. It carries out the reaction 2 L-dopa + O2 = 2 L-dopaquinone + 2 H2O. The enzyme catalyses L-tyrosine + O2 = L-dopaquinone + H2O. This is a copper-containing oxidase that functions in the formation of pigments such as melanins and other polyphenolic compounds. Catalyzes the rate-limiting conversions of tyrosine to DOPA, DOPA to DOPA-quinone and possibly 5,6 dihydroxyindole to indole-5'6 quinone. This chain is Phenoloxidase 3 (PPO3), found in Drosophila melanogaster (Fruit fly).